We begin with the raw amino-acid sequence, 289 residues long: Shikimate dehydrogenase (NADP(+)) (289 aa).

Shikimate is bound by residues 22-24 (SRS) and Thr-69. Lys-73 serves as the catalytic Proton acceptor. Position 85 (Glu-85) interacts with NADP(+). 2 residues coordinate shikimate: Asn-94 and Asp-109. Residues 134–138 (GAGGA), 158–163 (NRTLSR), and Ile-226 each bind NADP(+). Tyr-228 serves as a coordination point for shikimate. Gly-249 contributes to the NADP(+) binding site.

This sequence belongs to the shikimate dehydrogenase family. Homodimer.

It catalyses the reaction shikimate + NADP(+) = 3-dehydroshikimate + NADPH + H(+). It functions in the pathway metabolic intermediate biosynthesis; chorismate biosynthesis; chorismate from D-erythrose 4-phosphate and phosphoenolpyruvate: step 4/7. Functionally, involved in the biosynthesis of the chorismate, which leads to the biosynthesis of aromatic amino acids. Catalyzes the reversible NADPH linked reduction of 3-dehydroshikimate (DHSA) to yield shikimate (SA). The chain is Shikimate dehydrogenase (NADP(+)) from Brucella abortus (strain S19).